Reading from the N-terminus, the 635-residue chain is 1-deoxy-D-xylulose-5-phosphate synthase (635 aa).

Thiamine diphosphate-binding positions include H72 and 113 to 115 (GHA). Residue D144 participates in Mg(2+) binding. Residues 145-146 (GA), N174, Y287, and E370 each bind thiamine diphosphate. Position 174 (N174) interacts with Mg(2+).

Belongs to the transketolase family. DXPS subfamily. In terms of assembly, homodimer. Mg(2+) is required as a cofactor. The cofactor is thiamine diphosphate.

The catalysed reaction is D-glyceraldehyde 3-phosphate + pyruvate + H(+) = 1-deoxy-D-xylulose 5-phosphate + CO2. The protein operates within metabolic intermediate biosynthesis; 1-deoxy-D-xylulose 5-phosphate biosynthesis; 1-deoxy-D-xylulose 5-phosphate from D-glyceraldehyde 3-phosphate and pyruvate: step 1/1. In terms of biological role, catalyzes the acyloin condensation reaction between C atoms 2 and 3 of pyruvate and glyceraldehyde 3-phosphate to yield 1-deoxy-D-xylulose-5-phosphate (DXP). This is 1-deoxy-D-xylulose-5-phosphate synthase from Trichodesmium erythraeum (strain IMS101).